A 228-amino-acid polypeptide reads, in one-letter code: Sodium channel regulatory subunit beta-4 (228 aa).

A signal peptide spans 1-30; that stretch reads MSRAGNRGNTQARWLGIGLLGLFLLPMYLS. The Ig-like C2-type domain occupies 31-148; that stretch reads LEVSVGKATT…KDLNNSATIF (118 aa). The Extracellular portion of the chain corresponds to 31 to 161; the sequence is LEVSVGKATT…VDKLEEVDNT (131 aa). N-linked (GlcNAc...) asparagine glycosylation is found at Asn-45, Asn-71, Asn-113, and Asn-142. A disulfide bridge connects residues Cys-53 and Cys-131. The helical transmembrane segment at 162-182 threads the bilayer; sequence VTLIILAVVGGVIGLLVCILL. Residues 183–228 lie on the Cytoplasmic side of the membrane; it reads LKKLITFILKKTREKKKECLVSSSGNDNTENGLPGSKAEEKPPTKV. Positions 199–228 are disordered; the sequence is KECLVSSSGNDNTENGLPGSKAEEKPPTKV. Polar residues predominate over residues 203–213; the sequence is VSSSGNDNTEN. The segment covering 219-228 has biased composition (basic and acidic residues); it reads KAEEKPPTKV.

Belongs to the sodium channel auxiliary subunit SCN4B (TC 8.A.17) family. As to quaternary structure, a voltage-gated sodium (Nav) channel consists of an ion-conducting pore-forming alpha subunit functional on its own that is regulated by one or more beta subunits. The beta subunit SCN4B is disulfide-linked to the pore-forming alpha subunit. Interacts with SCN1A; regulatory subunit of SCN1A/Nav1.1. Interacts with SCN2A; regulatory subunit of SCN2A/Nav1.2. In terms of processing, contains an interchain disulfide bond with SCN2A. Expressed at a high level in dorsal root ganglia, at a lower level in brain, spinal cord, skeletal muscle and heart.

The protein resides in the cell membrane. In terms of biological role, regulatory subunit of multiple voltage-gated sodium (Nav) channels directly mediating the depolarization of excitable membranes. Navs, also called VGSCs (voltage-gated sodium channels) or VDSCs (voltage-dependent sodium channels), operate by switching between closed and open conformations depending on the voltage difference across the membrane. In the open conformation they allow Na(+) ions to selectively pass through the pore, along their electrochemical gradient. The influx of Na+ ions provokes membrane depolarization, initiating the propagation of electrical signals throughout cells and tissues. The accessory beta subunits participate in localization and functional modulation of the Nav channels. Modulates the activity of SCN1A/Nav1.1. Modulates the activity of SCN2A/Nav1.2. The chain is Sodium channel regulatory subunit beta-4 from Rattus norvegicus (Rat).